We begin with the raw amino-acid sequence, 92 residues long: Small ribosomal subunit protein bS6 (92 aa).

Belongs to the bacterial ribosomal protein bS6 family.

Binds together with bS18 to 16S ribosomal RNA. In Clostridioides difficile (strain 630) (Peptoclostridium difficile), this protein is Small ribosomal subunit protein bS6.